Here is a 70-residue protein sequence, read N- to C-terminus: ATP synthase subunit c (70 aa).

The next 2 helical transmembrane spans lie at 4–24 and 45–65; these read IAAA…NGLI and IMFI…VIAF.

Belongs to the ATPase C chain family. In terms of assembly, F-type ATPases have 2 components, F(1) - the catalytic core - and F(0) - the membrane proton channel. F(1) has five subunits: alpha(3), beta(3), gamma(1), delta(1), epsilon(1). F(0) has three main subunits: a(1), b(2) and c(10-14). The alpha and beta chains form an alternating ring which encloses part of the gamma chain. F(1) is attached to F(0) by a central stalk formed by the gamma and epsilon chains, while a peripheral stalk is formed by the delta and b chains.

Its subcellular location is the cell membrane. In terms of biological role, f(1)F(0) ATP synthase produces ATP from ADP in the presence of a proton or sodium gradient. F-type ATPases consist of two structural domains, F(1) containing the extramembraneous catalytic core and F(0) containing the membrane proton channel, linked together by a central stalk and a peripheral stalk. During catalysis, ATP synthesis in the catalytic domain of F(1) is coupled via a rotary mechanism of the central stalk subunits to proton translocation. Key component of the F(0) channel; it plays a direct role in translocation across the membrane. A homomeric c-ring of between 10-14 subunits forms the central stalk rotor element with the F(1) delta and epsilon subunits. The polypeptide is ATP synthase subunit c (Staphylococcus aureus (strain Mu3 / ATCC 700698)).